The following is a 175-amino-acid chain: Heme-dependent oxidative N-demethylase delta subunit (175 aa).

The heme-dependent oxidative N-demethylase (HODM) is a heterotetramer composed of a catalytic alpha subunit, a FMN/2Fe-2S-dependent oxidoreductase beta subunit, a gamma subunit with putative aminotransferase activity, and a delta subunit of unknown function.

Functionally, component of the heme-dependent oxidative N-demethylase (HODM) enzyme, that catalyzes the NADPH-dependent oxidation of dimethylamine (DMA) to methylamine (MA) and formaldehyde. Functions in bacterial methylated amine catabolism, linking alkylamine oxidation to the tetrahydrofolate C1 pool. The function of the delta subunit is unknown. The protein is Heme-dependent oxidative N-demethylase delta subunit of Ectopseudomonas mendocina (strain ymp) (Pseudomonas mendocina).